A 387-amino-acid polypeptide reads, in one-letter code: 3-ketoacyl-CoA thiolase (387 aa).

The Acyl-thioester intermediate role is filled by cysteine 91. Catalysis depends on proton acceptor residues histidine 343 and cysteine 373.

This sequence belongs to the thiolase-like superfamily. Thiolase family. In terms of assembly, heterotetramer of two alpha chains (FadB) and two beta chains (FadA).

The protein localises to the cytoplasm. The enzyme catalyses an acyl-CoA + acetyl-CoA = a 3-oxoacyl-CoA + CoA. The protein operates within lipid metabolism; fatty acid beta-oxidation. Its function is as follows. Catalyzes the final step of fatty acid oxidation in which acetyl-CoA is released and the CoA ester of a fatty acid two carbons shorter is formed. This is 3-ketoacyl-CoA thiolase from Shewanella sp. (strain MR-7).